A 186-amino-acid chain; its full sequence is Proline-rich protein 3 (186 aa).

The interval 1–97 (MPKRKKQNQP…LGPRSSPYGR (97 aa)) is disordered. 2 stretches are compositionally biased toward pro residues: residues 33–44 (MGPPSLLGPPPM) and 67–79 (MIPPLLSLPPPPR). A C3H1-type zinc finger spans residues 153–181 (KSDRPVCRHFSKKGHCRYEDHCAFYHPGV).

This Rattus norvegicus (Rat) protein is Proline-rich protein 3 (Prr3).